Reading from the N-terminus, the 53-residue chain is UPF0391 membrane protein YPTS_0599 (53 aa).

Transmembrane regions (helical) follow at residues 4–24 and 27–47; these read WGII…GGLA and AAWA…ISLF.

Belongs to the UPF0391 family.

It localises to the cell membrane. This chain is UPF0391 membrane protein YPTS_0599, found in Yersinia pseudotuberculosis serotype IB (strain PB1/+).